The following is a 405-amino-acid chain: Tryptophan synthase beta chain (405 aa).

K86 carries the post-translational modification N6-(pyridoxal phosphate)lysine.

Belongs to the TrpB family. Tetramer of two alpha and two beta chains. It depends on pyridoxal 5'-phosphate as a cofactor.

The catalysed reaction is (1S,2R)-1-C-(indol-3-yl)glycerol 3-phosphate + L-serine = D-glyceraldehyde 3-phosphate + L-tryptophan + H2O. The protein operates within amino-acid biosynthesis; L-tryptophan biosynthesis; L-tryptophan from chorismate: step 5/5. The beta subunit is responsible for the synthesis of L-tryptophan from indole and L-serine. The polypeptide is Tryptophan synthase beta chain (Shewanella piezotolerans (strain WP3 / JCM 13877)).